A 358-amino-acid polypeptide reads, in one-letter code: tRNA-specific 2-thiouridylase MnmA (358 aa).

Residues 6-13 and Leu32 contribute to the ATP site; that span reads AMSGGVDS. Residue Cys101 is the Nucleophile of the active site. Cysteines 101 and 193 form a disulfide. Gly125 provides a ligand contact to ATP. An interaction with tRNA region spans residues 143–145; it reads KDQ. Cys193 functions as the Cysteine persulfide intermediate in the catalytic mechanism.

Belongs to the MnmA/TRMU family.

Its subcellular location is the cytoplasm. It catalyses the reaction S-sulfanyl-L-cysteinyl-[protein] + uridine(34) in tRNA + AH2 + ATP = 2-thiouridine(34) in tRNA + L-cysteinyl-[protein] + A + AMP + diphosphate + H(+). Catalyzes the 2-thiolation of uridine at the wobble position (U34) of tRNA, leading to the formation of s(2)U34. The chain is tRNA-specific 2-thiouridylase MnmA from Mycolicibacterium paratuberculosis (strain ATCC BAA-968 / K-10) (Mycobacterium paratuberculosis).